Consider the following 70-residue polypeptide: Movement protein TGBp3 (70 aa).

Over 1–4 (MEVN) the chain is Lumenal. A helical transmembrane segment spans residues 5–27 (TYLNAIILVLVVTIIAVISTSLV). Over 28–70 (RTEPCVIKITGESITVLACKLDAETIKAIADLKPLSVERLSFH) the chain is Cytoplasmic.

Belongs to the Tymovirales TGBp3 protein family.

The protein resides in the host endoplasmic reticulum membrane. Functionally, plays a role in viral cell-to-cell propagation, by facilitating genome transport to neighboring plant cells through plasmosdesmata. May induce the formation of granular vesicles derived from the endoplasmic reticulum, which align on actin filaments. This is Movement protein TGBp3 from Brassica campestris (Field mustard).